A 116-amino-acid polypeptide reads, in one-letter code: T-cell leukemia/lymphoma protein 1A (116 aa).

It belongs to the TCL1 family. As to quaternary structure, homodimer. Interacts with AKT1, AKT2 and AKT3 (via PH domain). Interacts with PNPT1; the interaction has no effect on PNPT1 exonuclease activity.

It is found in the cytoplasm. The protein localises to the nucleus. The protein resides in the microsome. Its subcellular location is the endoplasmic reticulum. Its function is as follows. Enhances the phosphorylation and activation of AKT1 and AKT2. Enhances cell proliferation, stabilizes mitochondrial membrane potential and promotes cell survival. This chain is T-cell leukemia/lymphoma protein 1A (Tcl1a), found in Mus musculus (Mouse).